Reading from the N-terminus, the 508-residue chain is Small ribosomal subunit protein uS3m (508 aa).

Belongs to the universal ribosomal protein uS3 family. In terms of assembly, component of the mitochondrial small ribosomal subunit (mt-SSU). Mature N.crassa 74S mitochondrial ribosomes consist of a small (37S) and a large (54S) subunit. The 37S small subunit contains a 16S ribosomal RNA (16S mt-rRNA) and 32 different proteins. The 54S large subunit contains a 23S rRNA (23S mt-rRNA) and 42 different proteins. uS3m, uS4m and uS5m form the narrow entry site of the mRNA channel.

Its subcellular location is the mitochondrion. Its function is as follows. Component of the mitochondrial ribosome (mitoribosome), a dedicated translation machinery responsible for the synthesis of mitochondrial genome-encoded proteins, including at least some of the essential transmembrane subunits of the mitochondrial respiratory chain. The mitoribosomes are attached to the mitochondrial inner membrane and translation products are cotranslationally integrated into the membrane. uS3m is essential for mitochondrial protein synthesis and required for the maturation of small ribosomal subunits. This is Small ribosomal subunit protein uS3m (var1) from Neurospora crassa (strain ATCC 24698 / 74-OR23-1A / CBS 708.71 / DSM 1257 / FGSC 987).